The primary structure comprises 431 residues: Histidinol dehydrogenase (431 aa).

Residues Y130, Q191, and N214 each coordinate NAD(+). The substrate site is built by S237, Q259, and H262. 2 residues coordinate Zn(2+): Q259 and H262. Residues E327 and H328 each act as proton acceptor in the active site. 4 residues coordinate substrate: H328, D361, E415, and H420. Zn(2+) is bound at residue D361. Residue H420 coordinates Zn(2+).

This sequence belongs to the histidinol dehydrogenase family. Requires Zn(2+) as cofactor.

It catalyses the reaction L-histidinol + 2 NAD(+) + H2O = L-histidine + 2 NADH + 3 H(+). The protein operates within amino-acid biosynthesis; L-histidine biosynthesis; L-histidine from 5-phospho-alpha-D-ribose 1-diphosphate: step 9/9. Functionally, catalyzes the sequential NAD-dependent oxidations of L-histidinol to L-histidinaldehyde and then to L-histidine. The chain is Histidinol dehydrogenase from Bradyrhizobium diazoefficiens (strain JCM 10833 / BCRC 13528 / IAM 13628 / NBRC 14792 / USDA 110).